The chain runs to 277 residues: Diaminopimelate epimerase (277 aa).

3 residues coordinate substrate: asparagine 13, glutamine 46, and asparagine 66. The active-site Proton donor is cysteine 75. Substrate contacts are provided by residues 76-77 (GN), asparagine 160, asparagine 193, and 211-212 (ER). Catalysis depends on cysteine 220, which acts as the Proton acceptor. Substrate is bound at residue 221–222 (GS).

It belongs to the diaminopimelate epimerase family. As to quaternary structure, homodimer.

It is found in the cytoplasm. The enzyme catalyses (2S,6S)-2,6-diaminopimelate = meso-2,6-diaminopimelate. The protein operates within amino-acid biosynthesis; L-lysine biosynthesis via DAP pathway; DL-2,6-diaminopimelate from LL-2,6-diaminopimelate: step 1/1. Functionally, catalyzes the stereoinversion of LL-2,6-diaminopimelate (L,L-DAP) to meso-diaminopimelate (meso-DAP), a precursor of L-lysine and an essential component of the bacterial peptidoglycan. This chain is Diaminopimelate epimerase, found in Legionella pneumophila subsp. pneumophila (strain Philadelphia 1 / ATCC 33152 / DSM 7513).